The primary structure comprises 402 residues: MKRLWQHCHAATLKGGKYSIVEDAALVTDGPLIHWIGPRAELPPGDYAERIDLGGAWLTPGLIDCHTHAVFGGNRSGEFEQRLEGVSYAVIAAAGGGIASTVRATREASEEELLASARKRLEPLLRDGVTALEIKSGYGLDLASERKMLRVIRRLGERLPATVRSTCLAAHALPPEYAGRADDYIEHICSTMLPALAGEGLVDAVDAFCEHLAFSPAQVERVFIAARELGLPVKLHAEQLSSLHGSSLAARYRALSADHLEYMTEDDARAMGEAGTVAVLLPGAFYLLRETQLPPIDALRRHGVAMAIASDLNPGTSPALSLRLMLNMACTLFRLTPEETLAGVTLHAARALGLEASHGSLEVGKLADFVAWDIERPAELAYWLGGDLPKRVIRHAEEVYRG.

Fe(3+) contacts are provided by H66 and H68. Zn(2+) is bound by residues H66 and H68. 4-imidazolone-5-propanoate contacts are provided by R75, Y138, and H171. Position 138 (Y138) interacts with N-formimidoyl-L-glutamate. H236 contributes to the Fe(3+) binding site. Residue H236 participates in Zn(2+) binding. Q239 contributes to the 4-imidazolone-5-propanoate binding site. A Fe(3+)-binding site is contributed by D311. A Zn(2+)-binding site is contributed by D311. The N-formimidoyl-L-glutamate site is built by N313 and G315. T316 contributes to the 4-imidazolone-5-propanoate binding site.

The protein belongs to the metallo-dependent hydrolases superfamily. HutI family. The cofactor is Zn(2+). Fe(3+) serves as cofactor.

The protein localises to the cytoplasm. It carries out the reaction 4-imidazolone-5-propanoate + H2O = N-formimidoyl-L-glutamate. Its pathway is amino-acid degradation; L-histidine degradation into L-glutamate; N-formimidoyl-L-glutamate from L-histidine: step 3/3. Catalyzes the hydrolytic cleavage of the carbon-nitrogen bond in imidazolone-5-propanoate to yield N-formimidoyl-L-glutamate. It is the third step in the universal histidine degradation pathway. In Pseudomonas aeruginosa (strain LESB58), this protein is Imidazolonepropionase.